The sequence spans 1357 residues: DNA-directed RNA polymerase subunit beta (1357 aa).

It belongs to the RNA polymerase beta chain family. The RNAP catalytic core consists of 2 alpha, 1 beta, 1 beta' and 1 omega subunit. When a sigma factor is associated with the core the holoenzyme is formed, which can initiate transcription.

It catalyses the reaction RNA(n) + a ribonucleoside 5'-triphosphate = RNA(n+1) + diphosphate. Its function is as follows. DNA-dependent RNA polymerase catalyzes the transcription of DNA into RNA using the four ribonucleoside triphosphates as substrates. This Pseudomonas putida (strain GB-1) protein is DNA-directed RNA polymerase subunit beta.